The primary structure comprises 445 residues: 2-oxoisovalerate dehydrogenase subunit alpha, mitochondrial (445 aa).

A mitochondrion-targeting transit peptide spans 1–45 (MAVAIAAARVWRPNRGLSQAALLLLWRPGARGLARSHPHRQQQQF). 2 residues coordinate thiamine diphosphate: Tyr-158 and Arg-159. Ser-206 serves as a coordination point for K(+). Ser-207 provides a ligand contact to thiamine diphosphate. Pro-208, Thr-211, and Gln-212 together coordinate K(+). A Mg(2+)-binding site is contributed by Glu-238. Thiamine diphosphate contacts are provided by Gly-239, Ala-240, and Arg-265. Asn-267 and Tyr-269 together coordinate Mg(2+). His-336 is a binding site for thiamine diphosphate. Ser-337 is subject to Phosphoserine; by BCKDK. The residue at position 338 (Thr-338) is a Phosphothreonine. A phosphoserine mark is found at Ser-339 and Ser-347. At Lys-356 the chain carries N6-acetyllysine; alternate. At Lys-356 the chain carries N6-succinyllysine; alternate. N6-succinyllysine is present on Lys-380.

Belongs to the BCKDHA family. Heterotetramer of 2 alpha/BCKDHA and 2 beta chains/BCKDHB that forms the branched-chain alpha-keto acid decarboxylase (E1) component of the BCKD complex. The branched-chain alpha-ketoacid dehydrogenase is a large complex composed of three major building blocks E1, E2 and E3. It is organized around E2, a 24-meric cubic core composed of DBT, to which are associated 6 to 12 copies of E1, and approximately 6 copies of the dehydrogenase E3, a DLD dimer. Interacts with PPM1K. Thiamine diphosphate is required as a cofactor. Requires Mg(2+) as cofactor. In terms of processing, phosphorylated at Ser-337 by BCKDK and dephosphorylated by protein phosphatase PPM1K.

The protein localises to the mitochondrion matrix. It catalyses the reaction N(6)-[(R)-lipoyl]-L-lysyl-[protein] + 3-methyl-2-oxobutanoate + H(+) = N(6)-[(R)-S(8)-2-methylpropanoyldihydrolipoyl]-L-lysyl-[protein] + CO2. Its function is as follows. Together with BCKDHB forms the heterotetrameric E1 subunit of the mitochondrial branched-chain alpha-ketoacid dehydrogenase (BCKD) complex. The BCKD complex catalyzes the multi-step oxidative decarboxylation of alpha-ketoacids derived from the branched-chain amino-acids valine, leucine and isoleucine producing CO2 and acyl-CoA which is subsequently utilized to produce energy. The E1 subunit catalyzes the first step with the decarboxylation of the alpha-ketoacid forming an enzyme-product intermediate. A reductive acylation mediated by the lipoylamide cofactor of E2 extracts the acyl group from the E1 active site for the next step of the reaction. The chain is 2-oxoisovalerate dehydrogenase subunit alpha, mitochondrial (BCKDHA) from Macaca fascicularis (Crab-eating macaque).